We begin with the raw amino-acid sequence, 790 residues long: Cadherin-6 (790 aa).

An N-terminal signal peptide occupies residues 1 to 30 (MRTYHCFWLLFWAGQPHQSFLTLLSKRTSG). Positions 31–53 (FPEKEKVLVLSGNSRRDLSRSKR) are excised as a propeptide. 5 consecutive Cadherin domains span residues 54–159 (SWMW…EPMF), 160–268 (TKDV…PPRF), 269–383 (PQST…PPVF), 384–486 (SRPA…DNAP), and 487–608 (EFAM…LIHP). The Extracellular portion of the chain corresponds to 54 to 615 (SWMWNQFFLL…IHPTGLSTGA (562 aa)). N-linked (GlcNAc...) asparagine glycans are attached at residues Asn165 and Asn255. The tract at residues 261–289 (VNDNPPRFPQSTYQFRAPESTPPDSPIGR) is disordered. 3 N-linked (GlcNAc...) asparagine glycosylation sites follow: Asn437, Asn455, and Asn536. A helical membrane pass occupies residues 616-636 (LIAILLCIIILLVTVVLFAAL). Over 637–790 (RRQRKKEPLI…YGSMDSDKDS (154 aa)) the chain is Cytoplasmic.

The protein localises to the cell membrane. Its function is as follows. Cadherins are calcium-dependent cell adhesion proteins. They preferentially interact with themselves in a homophilic manner in connecting cells; cadherins may thus contribute to the sorting of heterogeneous cell types. The chain is Cadherin-6 (CDH6) from Gallus gallus (Chicken).